The primary structure comprises 197 residues: Small ribosomal subunit protein uS11m (197 aa).

Residues 43-52 (AAKEEVEKAE) are compositionally biased toward basic and acidic residues. Positions 43–66 (AAKEEVEKAETPAPAPSRSSFSIY) are disordered.

This sequence belongs to the universal ribosomal protein uS11 family. Component of the mitochondrial ribosome small subunit (28S) which comprises a 12S rRNA and about 30 distinct proteins.

It is found in the mitochondrion. In Bos taurus (Bovine), this protein is Small ribosomal subunit protein uS11m (MRPS11).